The following is a 250-amino-acid chain: Small ribosomal subunit protein uS2 (250 aa).

Belongs to the universal ribosomal protein uS2 family.

The polypeptide is Small ribosomal subunit protein uS2 (Albidiferax ferrireducens (strain ATCC BAA-621 / DSM 15236 / T118) (Rhodoferax ferrireducens)).